The following is a 379-amino-acid chain: MTNTRKNHPLMKIINNSFIDLPTPPNISSLWNFGSLLGACLTIQVITGLFLAMHYTADTTTAFSSVTHICRDVNYGWTIRYLHANGASMFFMCLFIHVGRGLYYGSFALLETWNIGIMLLFSVMATAFMGYVLPWGQMSFWGATVITNLLSAIPYVGTNLVEWIWGGFSVGKPTLTRFFALHFILPFIISALAMIHLLFLHETGSNNPLGMSSNSDKIPFHPYYTTKDFLGLLLLILLLMTLTLFYPDLLGDPDNYTPANPLNTPPHIKPEWYFLFAYAILRSIPNKPGGVVALILSILILAIIPFLQPSKQQTMMFRPLSQFLFWILVADLLTLTWIGGQPVENPFISIGQTASILYFSLMVFIMPMTCLIENKMLKW.

Helical transmembrane passes span 33 to 53 (FGSL…FLAM), 77 to 98 (WTIR…FIHV), 113 to 133 (WNIG…GYVL), and 178 to 198 (FFAL…IHLL). Residues histidine 83 and histidine 97 each contribute to the heme b site. Residues histidine 182 and histidine 196 each coordinate heme b. Histidine 201 contacts a ubiquinone. 4 helical membrane-spanning segments follow: residues 226-246 (TKDF…TLFY), 288-308 (PGGV…PFLQ), 320-340 (LSQF…WIGG), and 347-367 (FISI…FIMP).

It belongs to the cytochrome b family. The cytochrome bc1 complex contains 11 subunits: 3 respiratory subunits (MT-CYB, CYC1 and UQCRFS1), 2 core proteins (UQCRC1 and UQCRC2) and 6 low-molecular weight proteins (UQCRH/QCR6, UQCRB/QCR7, UQCRQ/QCR8, UQCR10/QCR9, UQCR11/QCR10 and a cleavage product of UQCRFS1). This cytochrome bc1 complex then forms a dimer. Heme b is required as a cofactor.

The protein localises to the mitochondrion inner membrane. Component of the ubiquinol-cytochrome c reductase complex (complex III or cytochrome b-c1 complex) that is part of the mitochondrial respiratory chain. The b-c1 complex mediates electron transfer from ubiquinol to cytochrome c. Contributes to the generation of a proton gradient across the mitochondrial membrane that is then used for ATP synthesis. This Lepilemur ruficaudatus (Red-tailed sportive lemur) protein is Cytochrome b (MT-CYB).